Reading from the N-terminus, the 716-residue chain is Zinc finger protein on ecdysone puffs (716 aa).

2 disordered regions span residues 103–168 (PSLL…GGIR) and 182–208 (KNAN…ESPY). A compositionally biased stretch (basic and acidic residues) spans 188–203 (KKKEPTPGEKKIESPT). S201 carries the phosphoserine modification. Phosphothreonine is present on T203. A Phosphoserine modification is found at S206. The segment at 216-240 (FYCHLCKKHMWDANSFENHIKGRTH) adopts a C2H2-type 1 zinc-finger fold. Residues 288-310 (DYCTMCDLNFHGHISTHRKSEGH) form a C2H2-type 2; atypical zinc finger. A C2H2-type 3 zinc finger spans residues 319-343 (PKCIECNKEFATRIDYDTHLLSAEH). The segment covering 350-359 (NNTKVGERKR) has biased composition (basic and acidic residues). Residues 350–447 (NNTKVGERKR…EEEEVALPVD (98 aa)) are disordered. A Nuclear localization signal motif is present at residues 379 to 383 (KRKKK). A compositionally biased stretch (basic and acidic residues) spans 386 to 401 (KKEGEAADGEAKKEGA). The span at 405–414 (EGAEGDEAEG) shows a compositional bias: acidic residues. The segment covering 415–431 (EEAKEGEEAADETKEGD) has biased composition (basic and acidic residues). Over residues 432-447 (ELNESQEEEEVALPVD) the composition is skewed to acidic residues. The C2H2-type 4 zinc finger occupies 489-513 (YECSVCSKFFDTEVTAEIHSRTATH). The segment at 534-716 (RAAAALEENE…QRARGRYNRY (183 aa)) is disordered. Residues 541-551 (ENERKKRKVEE) are compositionally biased toward basic and acidic residues. The Nuclear localization signal motif lies at 544–548 (RKKRK). Positions 560 to 638 (AAEETTEGAE…GQEGEQEPEP (79 aa)) are enriched in acidic residues. The segment covering 639–656 (EPAPVQTPAPAEPAPPAK) has biased composition (pro residues). Residues 657–704 (TPAKTPTKAAAPAAVASPAAAATSADASPSPAKKATPARAAAGAKATP) are compositionally biased toward low complexity. A phosphoserine mark is found at S673, S684, and S686. The residue at position 692 (T692) is a Phosphothreonine. Residues 707 to 716 (QRARGRYNRY) are compositionally biased toward basic residues.

It localises to the nucleus. The protein resides in the chromosome. In terms of biological role, may play a role in the process of early and late gene activation, or possibly in RNA processing, for a defined set of developmentally regulated loci. This chain is Zinc finger protein on ecdysone puffs (Pep), found in Drosophila melanogaster (Fruit fly).